The following is a 290-amino-acid chain: Phosphatidylglycerol--prolipoprotein diacylglyceryl transferase (290 aa).

7 helical membrane-spanning segments follow: residues 21–41, 60–80, 98–118, 124–144, 198–218, 224–244, and 258–278; these read VSLH…MWLA, LLYA…VLFY, GGMS…WFAH, FFQV…AGRL, SQLY…NLFI, IGSV…LVEF, and VISM…IMMA. Residue Arg143 coordinates a 1,2-diacyl-sn-glycero-3-phospho-(1'-sn-glycerol).

This sequence belongs to the Lgt family.

The protein resides in the cell inner membrane. It carries out the reaction L-cysteinyl-[prolipoprotein] + a 1,2-diacyl-sn-glycero-3-phospho-(1'-sn-glycerol) = an S-1,2-diacyl-sn-glyceryl-L-cysteinyl-[prolipoprotein] + sn-glycerol 1-phosphate + H(+). It participates in protein modification; lipoprotein biosynthesis (diacylglyceryl transfer). Functionally, catalyzes the transfer of the diacylglyceryl group from phosphatidylglycerol to the sulfhydryl group of the N-terminal cysteine of a prolipoprotein, the first step in the formation of mature lipoproteins. The protein is Phosphatidylglycerol--prolipoprotein diacylglyceryl transferase of Sodalis glossinidius (strain morsitans).